We begin with the raw amino-acid sequence, 415 residues long: Probable glucuronosyltransferase Os01g0926600 (415 aa).

Over 1–4 (MAMR) the chain is Cytoplasmic. A helical; Signal-anchor for type II membrane protein membrane pass occupies residues 5 to 25 (LSSAAVALALLLAATALEDVA). Topologically, residues 26–415 (RGQDTERIEG…QGPVGDLKPW (390 aa)) are lumenal. Residues asparagine 142 and asparagine 403 are each glycosylated (N-linked (GlcNAc...) asparagine).

Belongs to the glycosyltransferase 47 family.

It is found in the golgi apparatus membrane. In terms of biological role, involved in the synthesis of glucuronoxylan hemicellulose in secondary cell walls. This chain is Probable glucuronosyltransferase Os01g0926600, found in Oryza sativa subsp. japonica (Rice).